The chain runs to 113 residues: UPF0122 protein PEPE_0845 (113 aa).

Belongs to the UPF0122 family.

Functionally, might take part in the signal recognition particle (SRP) pathway. This is inferred from the conservation of its genetic proximity to ftsY/ffh. May be a regulatory protein. The chain is UPF0122 protein PEPE_0845 from Pediococcus pentosaceus (strain ATCC 25745 / CCUG 21536 / LMG 10740 / 183-1w).